The primary structure comprises 280 residues: Dehydrogenase/reductase SDR family member 2, mitochondrial (280 aa).

The N-terminal 23 residues, 1 to 23 (MLSAVARGYQGWFHPCARLSVRM), are a transit peptide targeting the mitochondrion. Residues S46 and I48 each coordinate NAD(+). Position 96 is an N6-acetyllysine; alternate (K96). Position 96 is an N6-succinyllysine; alternate (K96). Position 172 (S172) interacts with substrate. NAD(+) is bound by residues Y185 and K189. Y185 functions as the Proton acceptor in the catalytic mechanism. The residue at position 219 (K219) is an N6-acetyllysine; alternate. The residue at position 219 (K219) is an N6-succinyllysine; alternate. Residue T220 participates in NAD(+) binding. Residue S223 is modified to Phosphoserine. The residue at position 237 (K237) is an N6-succinyllysine.

The protein belongs to the short-chain dehydrogenases/reductases (SDR) family. In terms of assembly, directly interacts with MDM2; this interaction occurs in the nucleus and does not target DHRS2 to degradation. In terms of tissue distribution, widely expressed, with highest levels in liver and kidney, followed by heart, spleen, skeletal muscle and placenta. In hemopoietic cells, expressed in dendritic cells, but not in monocytes, macrophages, granulocytes, nor in B and T lymphocytes.

The protein resides in the mitochondrion matrix. It is found in the nucleus. Its function is as follows. NADPH-dependent oxidoreductase which catalyzes the reduction of dicarbonyl compounds. Displays reductase activity in vitro with 3,4-hexanedione, 2,3-heptanedione and 1-phenyl-1,2-propanedione as substrates. May function as a dicarbonyl reductase in the enzymatic inactivation of reactive carbonyls involved in covalent modification of cellular components. Also displays a minor hydroxysteroid dehydrogenase activity toward bile acids such as ursodeoxycholic acid (UDCA) and isoursodeoxycholic acid (isoUDCA), which makes it unlikely to control hormone levels. Doesn't show any activity in vitro with retinoids and sugars as substrates. Attenuates MDM2-mediated p53/TP53 degradation, leading to p53/TP53 stabilization and increased transcription activity, resulting in the accumulation of MDM2 and CDKN1A/p21. Reduces proliferation, migration and invasion of cancer cells and well as the production of ROS in cancer. In Homo sapiens (Human), this protein is Dehydrogenase/reductase SDR family member 2, mitochondrial.